Consider the following 691-residue polypeptide: Elongation factor G (691 aa).

The region spanning glutamate 8–threonine 283 is the tr-type G domain. Residues alanine 17 to threonine 24, aspartate 81 to histidine 85, and asparagine 135 to aspartate 138 contribute to the GTP site.

This sequence belongs to the TRAFAC class translation factor GTPase superfamily. Classic translation factor GTPase family. EF-G/EF-2 subfamily.

Its subcellular location is the cytoplasm. In terms of biological role, catalyzes the GTP-dependent ribosomal translocation step during translation elongation. During this step, the ribosome changes from the pre-translocational (PRE) to the post-translocational (POST) state as the newly formed A-site-bound peptidyl-tRNA and P-site-bound deacylated tRNA move to the P and E sites, respectively. Catalyzes the coordinated movement of the two tRNA molecules, the mRNA and conformational changes in the ribosome. In Maricaulis maris (strain MCS10) (Caulobacter maris), this protein is Elongation factor G.